Here is a 278-residue protein sequence, read N- to C-terminus: Glucosamine-6-phosphate deaminase (278 aa).

Asp-72 acts as the Proton acceptor; for enolization step in catalysis. Residue Asp-141 is the For ring-opening step of the active site. His-143 functions as the Proton acceptor; for ring-opening step in the catalytic mechanism. Glu-148 (for ring-opening step) is an active-site residue.

It belongs to the glucosamine/galactosamine-6-phosphate isomerase family. Homohexamer.

It is found in the cytoplasm. The catalysed reaction is alpha-D-glucosamine 6-phosphate + H2O = beta-D-fructose 6-phosphate + NH4(+). It participates in nucleotide-sugar biosynthesis; UDP-N-acetyl-alpha-D-glucosamine biosynthesis; alpha-D-glucosamine 6-phosphate from D-fructose 6-phosphate: step 1/1. In terms of biological role, catalyzes the reversible conversion of alpha-D-glucosamine 6-phosphate (GlcN-6P) into beta-D-fructose 6-phosphate (Fru-6P) and ammonium ion, a regulatory reaction step in de novo uridine diphosphate-N-acetyl-alpha-D-glucosamine (UDP-GlcNAc) biosynthesis via hexosamine pathway. This is Glucosamine-6-phosphate deaminase (Gnpda1) from Aedes aegypti (Yellowfever mosquito).